The sequence spans 706 residues: B-cell lymphoma 6 protein (706 aa).

Residues 32–99 (TDVVIVVSRE…MYTSRLNLRE (68 aa)) enclose the BTB domain. Residues 317 to 349 (EPPNAPLNRKGLVSPQSPQKSDCQPNSPTESCS) form a disordered region. The segment covering 330–349 (SPQSPQKSDCQPNSPTESCS) has biased composition (polar residues). A phosphoserine; by MAPK1 mark is found at Ser-333 and Ser-343. Ser-361 carries the post-translational modification Phosphoserine. Residues 376-379 (KKYK) form a required for interaction with NuRD complex and for transcriptional repressor activity region. An N6-acetyllysine modification is found at Lys-379. Ser-404 is subject to Phosphoserine. Residues 407-467 (AYTAPPACQP…PRSSSESHSP (61 aa)) form a disordered region. The span at 424–456 (DLQSPTKLSASGEDSTIPQASRLNNIVNRSMTG) shows a compositional bias: polar residues. Residues 457 to 466 (SPRSSSESHS) show a composition bias toward low complexity. C2H2-type zinc fingers lie at residues 518-541 (FFCN…LQTH), 546-568 (YKCD…KTVH), 574-596 (YRCN…TRIH), 602-624 (YKCE…VLIH), 630-652 (YPCE…LRIH), and 658-681 (YHCE…RQKH).

As to quaternary structure, homodimer. Interacts (via BTB domain) with the corepressors BCOR, NCOR1 and SMRT/NCOR2; the interactions are direct. Forms preferably ternary complexes with BCOR and SMRT/NCOR2 on target gene promoters but, on enhancer elements, interacts with SMRT/NCOR2 and HDAC3 to repress proximal gene expression. Interacts with histone deacetylases HDAC2, HDAC5 and HDAC9 (via the catalytic domain). Interacts with ZBTB7 and BCL6B. Interacts with SCF(FBXO11) complex; the interaction is independent of phosphorylation and promotes ubiquitination. Interacts (when phosphorylated) with PIN1; the interaction is required for BCL6 degradation upon genotoxic stress. Interacts with ZBTB17; inhibits ZBTB17 transcriptional activity. Interacts with CTBP1, autoinhibits its transcriptional expression. Interacts with NOTCH1 NCID and SIRT1; leads to a epigenetic repression of selective NOTCH1-target genes. Interacts (nor via BTB domain neither acetylated) with the NuRD complex components CHD4, HDAC1, MBD3 and MTA3; the interaction with MTA3 inhibits BCL6 acetylation and is required for BCL6 transpriptional repression. Phosphorylated by MAPK1 in response to antigen receptor activation at Ser-333 and Ser-343. Phosphorylated by ATM in response to genotoxic stress. Phosphorylation induces its degradation by ubiquitin/proteasome pathway. In terms of processing, polyubiquitinated. Polyubiquitinated by SCF(FBXO11), leading to its degradation by the proteasome. Ubiquitinated by the SCF(FBXL17) complex, leading to its degradation by the proteasome: ubiquitination by the SCF(FBXL17) complex takes place when aberrant BTB domain dimers are formed. Post-translationally, acetylated at Lys-379 by EP300 which inhibits the interaction with NuRD complex and the transcriptional repressor function. Deacetylated by HDAC- and SIR2-dependent pathways. As to expression, expressed in germinal center T- and B-cells and in primary immature dendritic cells.

It localises to the nucleus. Functionally, transcriptional repressor mainly required for germinal center (GC) formation and antibody affinity maturation which has different mechanisms of action specific to the lineage and biological functions. Forms complexes with different corepressors and histone deacetylases to repress the transcriptional expression of different subsets of target genes. Represses its target genes by binding directly to the DNA sequence 5'-TTCCTAGAA-3' (BCL6-binding site) or indirectly by repressing the transcriptional activity of transcription factors. In GC B-cells, represses genes that function in differentiation, inflammation, apoptosis and cell cycle control, also autoregulates its transcriptional expression and up-regulates, indirectly, the expression of some genes important for GC reactions, such as AICDA, through the repression of microRNAs expression, like miR155. An important function is to allow GC B-cells to proliferate very rapidly in response to T-cell dependent antigens and tolerate the physiological DNA breaks required for immunglobulin class switch recombination and somatic hypermutation without inducing a p53/TP53-dependent apoptotic response. In follicular helper CD4(+) T-cells (T(FH) cells), promotes the expression of T(FH)-related genes but inhibits the differentiation of T(H)1, T(H)2 and T(H)17 cells. Also required for the establishment and maintenance of immunological memory for both T- and B-cells. Suppresses macrophage proliferation through competition with STAT5 for STAT-binding motifs binding on certain target genes, such as CCL2 and CCND2. In response to genotoxic stress, controls cell cycle arrest in GC B-cells in both p53/TP53-dependedent and -independent manners. Besides, also controls neurogenesis through the alteration of the composition of NOTCH-dependent transcriptional complexes at selective NOTCH targets, such as HES5, including the recruitment of the deacetylase SIRT1 and resulting in an epigenetic silencing leading to neuronal differentiation. The protein is B-cell lymphoma 6 protein (BCL6) of Homo sapiens (Human).